Consider the following 62-residue polypeptide: Large ribosomal subunit protein eL37 (62 aa).

Residues Cys-20, Cys-23, Cys-35, and Cys-38 each contribute to the Zn(2+) site. Residues 20 to 38 form a C4-type zinc finger; that stretch reads CRRCGRRSYNVAKGYCAAC.

Belongs to the eukaryotic ribosomal protein eL37 family. Zn(2+) serves as cofactor.

Binds to the 23S rRNA. The protein is Large ribosomal subunit protein eL37 (rpl37e) of Aeropyrum pernix (strain ATCC 700893 / DSM 11879 / JCM 9820 / NBRC 100138 / K1).